Reading from the N-terminus, the 298-residue chain is Cell wall protein DAN1 (298 aa).

An N-terminal signal peptide occupies residues 1–19 (MSRISILAVAAALVASATA). The segment at 122-168 (PASTTEASSTSTSEASSAATESSSSSESSAETSSNAASTQATVSSES) is disordered. Asn-275 is lipidated: GPI-anchor amidated asparagine. A propeptide spans 276 to 298 (GANKFNNGVFGAAAIAGAAALLL) (removed in mature form).

Belongs to the SRP1/TIP1 family. In terms of processing, extensively O-glycosylated. The GPI-anchor is attached to the protein in the endoplasmic reticulum and serves to target the protein to the cell surface. There, the glucosamine-inositol phospholipid moiety is cleaved off and the GPI-modified mannoprotein is covalently attached via its lipidless GPI glycan remnant to the 1,6-beta-glucan of the outer cell wall layer.

It is found in the secreted. It localises to the cell wall. The protein localises to the membrane. In terms of biological role, component of the cell wall. This Saccharomyces cerevisiae (strain ATCC 204508 / S288c) (Baker's yeast) protein is Cell wall protein DAN1 (DAN1).